The following is a 522-amino-acid chain: ATP synthase subunit alpha, mitochondrial (522 aa).

172-179 contacts ATP; it reads GDRQTGKT.

Belongs to the ATPase alpha/beta chains family. In terms of assembly, F-type ATPases have 2 components, CF(1) - the catalytic core - and CF(0) - the membrane proton channel. CF(1) has five subunits: alpha(3), beta(3), gamma(1), delta(1), epsilon(1). CF(0) has three main subunits: a, b and c.

It is found in the mitochondrion. The protein localises to the mitochondrion inner membrane. Its function is as follows. Mitochondrial membrane ATP synthase (F(1)F(0) ATP synthase or Complex V) produces ATP from ADP in the presence of a proton gradient across the membrane which is generated by electron transport complexes of the respiratory chain. F-type ATPases consist of two structural domains, F(1) - containing the extramembraneous catalytic core, and F(0) - containing the membrane proton channel, linked together by a central stalk and a peripheral stalk. During catalysis, ATP synthesis in the catalytic domain of F(1) is coupled via a rotary mechanism of the central stalk subunits to proton translocation. Subunits alpha and beta form the catalytic core in F(1). Rotation of the central stalk against the surrounding alpha(3)beta(3) subunits leads to hydrolysis of ATP in three separate catalytic sites on the beta subunits. Subunit alpha does not bear the catalytic high-affinity ATP-binding sites. This Acanthamoeba castellanii (Amoeba) protein is ATP synthase subunit alpha, mitochondrial (ATP1).